A 486-amino-acid chain; its full sequence is Serralysin (486 aa).

Zn(2+) is bound at residue H187. E188 is an active-site residue. The Zn(2+) site is built by H191 and H197. Ca(2+) is bound by residues R266, D269, D298, G300, G301, D303, T340, and E342. 2 Hemolysin-type calcium-binding repeats span residues 345–362 (IGGS…ANTL) and 363–380 (KGGA…ADNL).

Belongs to the peptidase M10B family. Zn(2+) is required as a cofactor. The cofactor is Ca(2+).

The protein resides in the secreted. It carries out the reaction Preferential cleavage of bonds with hydrophobic residues in P1'.. This chain is Serralysin (prtA1), found in Photorhabdus luminescens (Xenorhabdus luminescens).